The primary structure comprises 228 residues: ATP-dependent dethiobiotin synthetase BioD (228 aa).

12–17 provides a ligand contact to ATP; that stretch reads EIGKTT. Threonine 16 serves as a coordination point for Mg(2+). Lysine 37 is an active-site residue. Serine 41 lines the substrate pocket. ATP-binding positions include aspartate 54, 116-119, and 205-207; these read EGAG and PRL. 2 residues coordinate Mg(2+): aspartate 54 and glutamate 116.

The protein belongs to the dethiobiotin synthetase family. As to quaternary structure, homodimer. The cofactor is Mg(2+).

Its subcellular location is the cytoplasm. The enzyme catalyses (7R,8S)-7,8-diammoniononanoate + CO2 + ATP = (4R,5S)-dethiobiotin + ADP + phosphate + 3 H(+). It participates in cofactor biosynthesis; biotin biosynthesis; biotin from 7,8-diaminononanoate: step 1/2. Catalyzes a mechanistically unusual reaction, the ATP-dependent insertion of CO2 between the N7 and N8 nitrogen atoms of 7,8-diaminopelargonic acid (DAPA, also called 7,8-diammoniononanoate) to form a ureido ring. The protein is ATP-dependent dethiobiotin synthetase BioD of Pseudomonas paraeruginosa (strain DSM 24068 / PA7) (Pseudomonas aeruginosa (strain PA7)).